We begin with the raw amino-acid sequence, 247 residues long: Protein IRON-RELATED TRANSCRIPTION FACTOR 2 (247 aa).

Positions 68–75 (HRKLSHNA) match the Nuclear localization signal motif. The tract at residues 68-81 (HRKLSHNAYERDRR) is basic motif. One can recognise a bHLH domain in the interval 68-119 (HRKLSHNAYERDRRKQLNELYSSLRALLPDADHTKLSIPTTVSRVLKYIPEL). Positions 82–119 (KQLNELYSSLRALLPDADHTKLSIPTTVSRVLKYIPEL) are helix-loop-helix motif.

Belongs to the bHLH protein family. In terms of assembly, forms homodimers. Interacts with BHLH156 in the nucleus. In terms of tissue distribution, expressed constitutively at low levels in the roots. Also observed in flowers, developing seeds, embryos and vascular bundles.

The protein localises to the nucleus. It localises to the cytoplasm. Transcription activator that binds to the DNA motif 5'-CACGTGG-3' in the promoter of iron (Fe) deficiency-inducible genes as well as of genes involved in iron homeostasis, thus contributing to basal tolerance to iron deficiency, iron uptake from soil and iron transport, particularly during seed maturation and germination. Promotes the accumulation of mugineic acid family phytosiderophores (MAs). Required for ethylene-mediated signaling during iron deficiency responses. Improves growth and yield, especially in calcareous soil with low iron availability. Promotes iron concentration in shoots and grain. In Oryza sativa subsp. japonica (Rice), this protein is Protein IRON-RELATED TRANSCRIPTION FACTOR 2.